The sequence spans 1085 residues: Voltage-dependent calcium channel subunit alpha-2/delta-3 (1085 aa).

The signal sequence occupies residues 1 to 33 (MAGPGSLCCASRGASALLATALLYAALGDVVRS). At 34 to 1062 (EQQIPLSVVK…HPEENARECG (1029 aa)) the chain is on the extracellular side. Asn166 carries N-linked (GlcNAc...) asparagine glycosylation. Residues 256-438 (DVVILVDVSG…ENVMEYLHVL (183 aa)) form the VWFA domain. Residues Asp262, Ser264, and Ser266 each coordinate a divalent metal cation. An MIDAS-like motif motif is present at residues 262–266 (DVSGS). Residue Asn309 is glycosylated (N-linked (GlcNAc...) asparagine). Cys412 and Cys1049 are joined by a disulfide. Residues 452 to 543 (WTEAYIDSTL…RPLYEEGKKR (92 aa)) form the Cache domain. N-linked (GlcNAc...) asparagine glycans are attached at residues Asn547 and Asn626. Residue Tyr918 is modified to Phosphotyrosine. Residues 1063-1083 (GASSLQAQVALLLLPLVSSLF) form a helical membrane-spanning segment. Topologically, residues 1084–1085 (SR) are cytoplasmic.

It belongs to the calcium channel subunit alpha-2/delta family. As to quaternary structure, dimer formed of alpha-2-2 and delta-2 chains; disulfide-linked. Voltage-dependent calcium channels are multisubunit complexes, consisting of alpha-1 (CACNA1), alpha-2 (CACNA2D), beta (CACNB) and delta (CACNA2D) subunits in a 1:1:1:1 ratio. In terms of processing, N-glycosylated. May be proteolytically processed into subunits alpha-2-3 and delta-3 that are disulfide-linked. It is however unclear whether such cleavage really takes place in vivo and has a functional role. In heart, it is expressed in atrium but not in ventricle.

Its subcellular location is the membrane. The alpha-2/delta subunit of voltage-dependent calcium channels regulates calcium current density and activation/inactivation kinetics of the calcium channel. Acts as a regulatory subunit for P/Q-type calcium channel (CACNA1A), N-type (CACNA1B), L-type (CACNA1C OR CACNA1D) but not T-type (CACNA1G). The chain is Voltage-dependent calcium channel subunit alpha-2/delta-3 (Cacna2d3) from Rattus norvegicus (Rat).